The primary structure comprises 294 residues: Phosphoribosylaminoimidazole-succinocarboxamide synthase (294 aa).

The protein belongs to the SAICAR synthetase family.

The catalysed reaction is 5-amino-1-(5-phospho-D-ribosyl)imidazole-4-carboxylate + L-aspartate + ATP = (2S)-2-[5-amino-1-(5-phospho-beta-D-ribosyl)imidazole-4-carboxamido]succinate + ADP + phosphate + 2 H(+). It functions in the pathway purine metabolism; IMP biosynthesis via de novo pathway; 5-amino-1-(5-phospho-D-ribosyl)imidazole-4-carboxamide from 5-amino-1-(5-phospho-D-ribosyl)imidazole-4-carboxylate: step 1/2. This is Phosphoribosylaminoimidazole-succinocarboxamide synthase from Rhodococcus opacus (strain B4).